The primary structure comprises 334 residues: MSLDIDQIALHQLIKRDEQTLDVVLRDSLLPTNAVVEEMMAELHRVYSAKSKAYGLFNEQSELADALKRSRKGDEDFLSFSRAATGRLRDELAKYPFAEGGVVLFCQYRYLAVEYLLISVLSSCHSMRVNEQLDLSTTHYLDINRADIVARIDLTEWETNPESTRYLTFLTGRVGRKVSDFFMDFLSAAEGLDTKAQNRGLLQAVDDYCADAELGKNERQAYRQQVYSYCNEQLQAGEEIALQVLAQELPKLGEKDFQQFSAEQGYALEESFPADRGTLRQLTKFAGSGGGLSINFDALLLDERIFWDAATDTLTIKGTPPNLRDQLQRRAGSK.

It belongs to the YejK family.

It is found in the cytoplasm. It localises to the nucleoid. The chain is Nucleoid-associated protein YPN_2714 from Yersinia pestis bv. Antiqua (strain Nepal516).